We begin with the raw amino-acid sequence, 34 residues long: Photosystem II reaction center protein M (34 aa).

The helical transmembrane segment at 5-25 threads the bilayer; the sequence is ILAFIATALFILVPTAFLLII.

Belongs to the PsbM family. In terms of assembly, PSII is composed of 1 copy each of membrane proteins PsbA, PsbB, PsbC, PsbD, PsbE, PsbF, PsbH, PsbI, PsbJ, PsbK, PsbL, PsbM, PsbT, PsbX, PsbY, PsbZ, Psb30/Ycf12, at least 3 peripheral proteins of the oxygen-evolving complex and a large number of cofactors. It forms dimeric complexes.

The protein resides in the plastid. Its subcellular location is the chloroplast thylakoid membrane. In terms of biological role, one of the components of the core complex of photosystem II (PSII). PSII is a light-driven water:plastoquinone oxidoreductase that uses light energy to abstract electrons from H(2)O, generating O(2) and a proton gradient subsequently used for ATP formation. It consists of a core antenna complex that captures photons, and an electron transfer chain that converts photonic excitation into a charge separation. This subunit is found at the monomer-monomer interface. The chain is Photosystem II reaction center protein M from Buxus microphylla (Littleleaf boxwood).